Reading from the N-terminus, the 412-residue chain is Tyrosine--tRNA ligase (412 aa).

Tyr38 lines the L-tyrosine pocket. A 'HIGH' region motif is present at residues Cys43–Ser52. Residues Tyr170 and Gln174 each contribute to the L-tyrosine site. Residues Lys230 to Thr234 carry the 'KMSKS' region motif. ATP is bound at residue Lys233. An S4 RNA-binding domain is found at Ile343–Val409.

It belongs to the class-I aminoacyl-tRNA synthetase family. TyrS type 1 subfamily. As to quaternary structure, homodimer.

It is found in the cytoplasm. It carries out the reaction tRNA(Tyr) + L-tyrosine + ATP = L-tyrosyl-tRNA(Tyr) + AMP + diphosphate + H(+). Its function is as follows. Catalyzes the attachment of tyrosine to tRNA(Tyr) in a two-step reaction: tyrosine is first activated by ATP to form Tyr-AMP and then transferred to the acceptor end of tRNA(Tyr). This Anaplasma phagocytophilum (strain HZ) protein is Tyrosine--tRNA ligase.